Consider the following 392-residue polypeptide: Heat-inducible transcription repressor HrcA (392 aa).

This sequence belongs to the HrcA family.

In terms of biological role, negative regulator of class I heat shock genes (grpE-dnaK-dnaJ and groELS operons). Prevents heat-shock induction of these operons. The sequence is that of Heat-inducible transcription repressor HrcA from Chlamydia trachomatis serovar L2 (strain ATCC VR-902B / DSM 19102 / 434/Bu).